Reading from the N-terminus, the 169-residue chain is Disulfide bond formation protein B (169 aa).

Over 1 to 13 (MQSLISFAHSRLS) the chain is Cytoplasmic. Residues 14–30 (WGILALSALALESAALY) form a helical membrane-spanning segment. Residues 31-48 (FQHIMKLDPCVMCIYQRV) lie on the Periplasmic side of the membrane. C40 and C43 are oxidised to a cystine. The helical transmembrane segment at 49–64 (AVFGLLGAGLFGFMAP) threads the bilayer. Residues 65-71 (ANRVIRA) are Cytoplasmic-facing. The chain crosses the membrane as a helical span at residues 72 to 89 (LGALLWGISAAWGLKLAL). The Periplasmic segment spans residues 90–144 (ELVDMQNNPNPFSTCSFLPEFPSWLQLHEWLPSVFMPTGMCTDIPWEFAGVTMGE). Residues C104 and C130 are joined by a disulfide bond. Residues 145–163 (WMIVAFSVYLLAWLAFIVP) form a helical membrane-spanning segment. At 164–169 (MLKKSA) the chain is on the cytoplasmic side.

Belongs to the DsbB family.

Its subcellular location is the cell inner membrane. Its function is as follows. Required for disulfide bond formation in some periplasmic proteins. Acts by oxidizing the DsbA protein. The protein is Disulfide bond formation protein B of Shewanella amazonensis (strain ATCC BAA-1098 / SB2B).